The sequence spans 435 residues: NADH-quinone oxidoreductase subunit D (435 aa).

This sequence belongs to the complex I 49 kDa subunit family. NDH-1 is composed of 14 different subunits. Subunits NuoB, C, D, E, F, and G constitute the peripheral sector of the complex.

Its subcellular location is the cell inner membrane. The catalysed reaction is a quinone + NADH + 5 H(+)(in) = a quinol + NAD(+) + 4 H(+)(out). Its function is as follows. NDH-1 shuttles electrons from NADH, via FMN and iron-sulfur (Fe-S) centers, to quinones in the respiratory chain. The immediate electron acceptor for the enzyme in this species is believed to be ubiquinone. Couples the redox reaction to proton translocation (for every two electrons transferred, four hydrogen ions are translocated across the cytoplasmic membrane), and thus conserves the redox energy in a proton gradient. The protein is NADH-quinone oxidoreductase subunit D of Xylella fastidiosa (strain 9a5c).